Consider the following 337-residue polypeptide: Alanine racemase (337 aa).

Catalysis depends on Lys33, which acts as the Proton acceptor; specific for D-alanine. Position 33 is an N6-(pyridoxal phosphate)lysine (Lys33). A substrate-binding site is contributed by Arg118. Tyr246 serves as the catalytic Proton acceptor; specific for L-alanine. Met292 is a binding site for substrate.

The protein belongs to the alanine racemase family. Pyridoxal 5'-phosphate is required as a cofactor.

The enzyme catalyses L-alanine = D-alanine. Its pathway is amino-acid biosynthesis; D-alanine biosynthesis; D-alanine from L-alanine: step 1/1. In terms of biological role, catalyzes the interconversion of L-alanine and D-alanine. May also act on other amino acids. This is Alanine racemase (alr) from Campylobacter concisus (strain 13826).